The sequence spans 345 residues: S-adenosylmethionine:tRNA ribosyltransferase-isomerase (345 aa).

Belongs to the QueA family. In terms of assembly, monomer.

The protein localises to the cytoplasm. It carries out the reaction 7-aminomethyl-7-carbaguanosine(34) in tRNA + S-adenosyl-L-methionine = epoxyqueuosine(34) in tRNA + adenine + L-methionine + 2 H(+). Its pathway is tRNA modification; tRNA-queuosine biosynthesis. Its function is as follows. Transfers and isomerizes the ribose moiety from AdoMet to the 7-aminomethyl group of 7-deazaguanine (preQ1-tRNA) to give epoxyqueuosine (oQ-tRNA). The polypeptide is S-adenosylmethionine:tRNA ribosyltransferase-isomerase (Azoarcus sp. (strain BH72)).